The following is a 620-amino-acid chain: FAD-linked oxidoreductase notD (620 aa).

The N-terminal stretch at 1 to 21 (MHYIRELLIVVFTSCPALSYA) is a signal peptide. N-linked (GlcNAc...) asparagine glycans are attached at residues asparagine 50, asparagine 86, and asparagine 109. One can recognise an FAD-binding PCMH-type domain in the interval 124–313 (SQGRIPRYSA…TSVTMPVFGA (190 aa)). The N-linked (GlcNAc...) asparagine glycan is linked to asparagine 403.

Belongs to the oxygen-dependent FAD-linked oxidoreductase family. FAD is required as a cofactor.

It participates in alkaloid biosynthesis. Its function is as follows. FAD-linked oxidoreductase; part of the gene cluster that mediates the biosynthesis of notoamide, a fungal indole alkaloid that belongs to a family of natural products containing a characteristic bicyclo[2.2.2]diazaoctane core. The first step of notoamide biosynthesis involves coupling of L-proline and L-tryptophan by the bimodular NRPS notE, to produce cyclo-L-tryptophan-L-proline called brevianamide F. The reverse prenyltransferase notF then acts as a deoxybrevianamide E synthase and converts brevianamide F to deoxybrevianamide E via reverse prenylation at C-2 of the indole ring leading to the bicyclo[2.2.2]diazaoctane core. Deoxybrevianamide E is further hydroxylated at C-6 of the indole ring, likely catalyzed by the cytochrome P450 monooxygenase notG, to yield 6-hydroxy-deoxybrevianamide E. 6-hydroxy-deoxybrevianamide E is a specific substrate of the prenyltransferase notC for normal prenylation at C-7 to produce 6-hydroxy-7-prenyl-deoxybrevianamide, also called notoamide S. As the proposed pivotal branching point in notoamide biosynthesis, notoamide S can be diverted to notoamide E through an oxidative pyran ring closure putatively catalyzed by either notH cytochrome P450 monooxygenase or the notD FAD-linked oxidoreductase. This step would be followed by an indole 2,3-epoxidation-initiated pinacol-like rearrangement catalyzed by the notB FAD-dependent monooxygenase leading to the formation of notoamide C and notoamide D. On the other hand notoamide S is converted to notoamide T by notH (or notD), a bifunctional oxidase that also functions as the intramolecular Diels-Alderase responsible for generation of (+)-notoamide T. To generate antipodal (-)-notoaminide T, notH' (or notD') in Aspergillus versicolor is expected to catalyze a Diels-Alder reaction leading to the opposite stereochemistry. The remaining oxidoreductase notD (or notH) likely catalyzes the oxidative pyran ring formation to yield (+)-stephacidin A. The FAD-dependent monooxygenase notI is highly similar to notB and is predicted to catalyze a similar conversion from (+)-stephacidin A to (-)-notoamide B via the 2,3-epoxidation of (+)-stephacidin A followed by a pinacol-type rearrangement. Finally, it remains unclear which enzyme could be responsible for the final hydroxylation steps leading to notoamide A and sclerotiamide. This is FAD-linked oxidoreductase notD from Aspergillus sp. (strain MF297-2).